Consider the following 85-residue polypeptide: ATP synthase epsilon chain (85 aa).

This sequence belongs to the ATPase epsilon chain family. As to quaternary structure, F-type ATPases have 2 components, CF(1) - the catalytic core - and CF(0) - the membrane proton channel. CF(1) has five subunits: alpha(3), beta(3), gamma(1), delta(1), epsilon(1). CF(0) has three main subunits: a, b and c.

Its subcellular location is the cell membrane. In terms of biological role, produces ATP from ADP in the presence of a proton gradient across the membrane. This Frankia casuarinae (strain DSM 45818 / CECT 9043 / HFP020203 / CcI3) protein is ATP synthase epsilon chain.